We begin with the raw amino-acid sequence, 1141 residues long: Serine-aspartate repeat-containing protein E (1141 aa).

Positions 1–52 (MINRDNKKAITKKGMISNRLNKFSIRKYTVGTASILVGTTLIFGLGNQEAKA) are cleaved as a signal peptide. Residues 23–34 (FSIRKYTVGTAS) carry the YSIRK-G/S signaling motif motif. The interval 53 to 601 (AENTSTENAK…GDGTVKPEEK (549 aa)) is ligand binding A region. A disordered region spans residues 54–225 (ENTSTENAKQ…SKEELKNNPE (172 aa)). The span at 61 to 75 (AKQDDATTSDNKEVV) shows a compositional bias: basic and acidic residues. Low complexity predominate over residues 77-90 (EAENNSTTENDSTN). Residues 92–109 (IKKETNTDSQPEAKEEST) show a composition bias toward basic and acidic residues. Residues 110–126 (KSSTQQQQNNVTATTET) show a composition bias toward low complexity. A compositionally biased stretch (basic and acidic residues) spans 130–145 (NIEKENVKPSTDKTAT). A compositionally biased stretch (polar residues) spans 158 to 207 (PNNTNNDVTTKPSTSEIQTKPTTPQESTNIENSQPQPTPSKVDNQVTDAT). A compositionally biased stretch (basic and acidic residues) spans 216–225 (SKEELKNNPE). CNA-B domains lie at 602–714 (LYKI…YKEP), 715–824 (KYNL…YKTP), and 825–935 (KYSL…EEDT). The interval 899-1117 (VTNTTEDDKD…GSENNGSNNA (219 aa)) is disordered. 2 stretches are compositionally biased toward acidic residues: residues 903-913 (TEDDKDADGGE) and 930-1080 (YFEE…DSDS). The LPXTG sorting signal motif lies at 1104–1108 (LPETG). Thr1107 is modified (pentaglycyl murein peptidoglycan amidated threonine). Residues 1108 to 1141 (GSENNGSNNATLFGGLFAALGSLLLFGRRKKQNK) constitute a propeptide, removed by sortase.

Belongs to the serine-aspartate repeat-containing protein (SDr) family. As to quaternary structure, interacts with host complement factor H/CFAH (via C-terminus). Interacts with host complement regulator C4BPA.

The protein resides in the secreted. It localises to the cell wall. Its function is as follows. Cell surface-associated calcium-binding protein which plays an important role in adhesion and pathogenesis. Contributes to the resistance to killing by innate immune components in blood and thus attenuates bacterial clearance by interacting with host complement factor H/CFAH and modulating its activity. Also inhibits bacterial opsonization and killing by interacting with host complement regulator C4BPA and thus inhibiting classical complement pathway activation. The polypeptide is Serine-aspartate repeat-containing protein E (sdrE) (Staphylococcus aureus (strain MSSA476)).